Consider the following 785-residue polypeptide: Phenylalanine--tRNA ligase beta subunit (785 aa).

Residues 38 to 150 enclose the tRNA-binding domain; it reads CEHLKTFVIA…NTYNVGDTFF (113 aa). The region spanning 394–470 is the B5 domain; that stretch reads VDNIELNFFP…RLYGYDKICE (77 aa). Mg(2+) contacts are provided by D448, D454, E457, and E458. In terms of domain architecture, FDX-ACB spans 690–783; that stretch reads SCYQSVKRDF…VAEKLGGVLR (94 aa).

It belongs to the phenylalanyl-tRNA synthetase beta subunit family. Type 1 subfamily. Tetramer of two alpha and two beta subunits. Requires Mg(2+) as cofactor.

It localises to the cytoplasm. The catalysed reaction is tRNA(Phe) + L-phenylalanine + ATP = L-phenylalanyl-tRNA(Phe) + AMP + diphosphate + H(+). The protein is Phenylalanine--tRNA ligase beta subunit of Ehrlichia canis (strain Jake).